The sequence spans 252 residues: 5-oxoprolinase subunit A (252 aa).

The protein belongs to the LamB/PxpA family. In terms of assembly, forms a complex composed of PxpA, PxpB and PxpC.

The enzyme catalyses 5-oxo-L-proline + ATP + 2 H2O = L-glutamate + ADP + phosphate + H(+). Its function is as follows. Catalyzes the cleavage of 5-oxoproline to form L-glutamate coupled to the hydrolysis of ATP to ADP and inorganic phosphate. The sequence is that of 5-oxoprolinase subunit A from Mycobacterium marinum (strain ATCC BAA-535 / M).